Consider the following 460-residue polypeptide: Ribosomal protein uS12 methylthiotransferase RimO (460 aa).

The region spanning 16–130 is the MTTase N-terminal domain; sequence NKIHFISLGC…ILSAIESKEY (115 aa). [4Fe-4S] cluster contacts are provided by cysteine 25, cysteine 61, cysteine 93, cysteine 164, cysteine 168, and cysteine 171. Residues 150–382 form the Radical SAM core domain; that stretch reads STPKHYAYLK…SQAQKQNVEK (233 aa). The TRAM domain occupies 385–455; sequence QKLVGQVVEA…GYDLIGRVVK (71 aa).

Belongs to the methylthiotransferase family. RimO subfamily. [4Fe-4S] cluster serves as cofactor.

The protein resides in the cytoplasm. The enzyme catalyses L-aspartate(89)-[ribosomal protein uS12]-hydrogen + (sulfur carrier)-SH + AH2 + 2 S-adenosyl-L-methionine = 3-methylsulfanyl-L-aspartate(89)-[ribosomal protein uS12]-hydrogen + (sulfur carrier)-H + 5'-deoxyadenosine + L-methionine + A + S-adenosyl-L-homocysteine + 2 H(+). In terms of biological role, catalyzes the methylthiolation of an aspartic acid residue of ribosomal protein uS12. The protein is Ribosomal protein uS12 methylthiotransferase RimO of Chlamydia felis (strain Fe/C-56) (Chlamydophila felis).